A 396-amino-acid chain; its full sequence is Protein BOP3 (396 aa).

6 disordered regions span residues M1 to N22, G98 to P126, P145 to H168, V203 to N239, R254 to L274, and R355 to T396. Polar residues-rich tracts occupy residues Q111–N124, A159–H168, and G210–L230. Residues R355–C369 are compositionally biased toward basic and acidic residues. Positions S370 to T396 are enriched in polar residues.

The protein resides in the cytoplasm. Its subcellular location is the nucleus. In terms of biological role, involved in resistance to methylmercury. Overexpression suppresses a PAM1-SLV3 double null mutation. The protein is Protein BOP3 (BOP3) of Saccharomyces cerevisiae (strain ATCC 204508 / S288c) (Baker's yeast).